Reading from the N-terminus, the 909-residue chain is DNA mismatch repair protein MutS (909 aa).

Basic and acidic residues predominate over residues 275-290 (QKAERPPLSRPEREEQ). Residues 275-295 (QKAERPPLSRPEREEQGSTLF) are disordered. Residue 661 to 668 (GPNMGGKS) coordinates ATP.

Belongs to the DNA mismatch repair MutS family.

Functionally, this protein is involved in the repair of mismatches in DNA. It is possible that it carries out the mismatch recognition step. This protein has a weak ATPase activity. This Mesorhizobium japonicum (strain LMG 29417 / CECT 9101 / MAFF 303099) (Mesorhizobium loti (strain MAFF 303099)) protein is DNA mismatch repair protein MutS.